A 118-amino-acid chain; its full sequence is Small ribosomal subunit protein uS13 (118 aa).

The disordered stretch occupies residues 92-118; it reads RRGHPLRGQRTRTNARTRKGPRKAIRK.

This sequence belongs to the universal ribosomal protein uS13 family. As to quaternary structure, part of the 30S ribosomal subunit. Forms a loose heterodimer with protein S19. Forms two bridges to the 50S subunit in the 70S ribosome.

Its function is as follows. Located at the top of the head of the 30S subunit, it contacts several helices of the 16S rRNA. In the 70S ribosome it contacts the 23S rRNA (bridge B1a) and protein L5 of the 50S subunit (bridge B1b), connecting the 2 subunits; these bridges are implicated in subunit movement. Contacts the tRNAs in the A and P-sites. This is Small ribosomal subunit protein uS13 from Xanthomonas campestris pv. campestris (strain ATCC 33913 / DSM 3586 / NCPPB 528 / LMG 568 / P 25).